The primary structure comprises 218 residues: Glutathione S-transferase Mu 2 (218 aa).

In terms of domain architecture, GST N-terminal spans 2 to 88; it reads PMTLGYWDIR…YLGRKHNLCG (87 aa). Residue 7–8 coordinates glutathione; it reads YW. A phosphoserine mark is found at serine 27 and serine 44. Residues 43 to 46, lysine 50, 59 to 60, and 72 to 73 contribute to the glutathione site; these read RSQW, NL, and QS. The GST C-terminal domain occupies 90-214; that stretch reads TEEERIRVDV…SKPIFAKMAF (125 aa). Tyrosine 116 contacts substrate. Serine 117 bears the Phosphoserine mark.

Belongs to the GST superfamily. Mu family. Homodimer or heterodimer.

Its subcellular location is the cytoplasm. The catalysed reaction is RX + glutathione = an S-substituted glutathione + a halide anion + H(+). It carries out the reaction 11(S)-hydroxy-14(S),15(S)-epoxy-(5Z,8Z,12E)-eicosatrienoate + glutathione = (11S,15S)-dihydroxy-14(R)-S-glutathionyl-(5Z,8Z,12E)-eicosatrienoate. Its function is as follows. Conjugation of reduced glutathione to a wide number of exogenous and endogenous hydrophobic electrophiles. Participates in the formation of novel hepoxilin regioisomers. The chain is Glutathione S-transferase Mu 2 from Rattus norvegicus (Rat).